A 203-amino-acid polypeptide reads, in one-letter code: MFEHYLSLLIKAVFVENMALAFFLGMCTFLALSKKMEAAIGLGIAVVVVLSVTVPVNNAIYNGLLREGALSWAGLPNVDLSFLGLLTYIGVIAAIVQILEMVLDKFFPALYNALGVFLPLITVNCAIMGASLFMVERDYTFGESLVYGFGAGLGWALAIIALAGIREKLKYSDVPEGLRGLGITFITVGLMSLGFMSFSGISL.

A run of 6 helical transmembrane segments spans residues 12–32 (AVFV…FLAL), 36–56 (MEAA…TVPV), 82–102 (FLGL…LEMV), 115–135 (GVFL…LFMV), 145–165 (LVYG…LAGI), and 181–201 (LGIT…FSGI).

Belongs to the NqrDE/RnfAE family. Composed of six subunits; NqrA, NqrB, NqrC, NqrD, NqrE and NqrF.

The protein localises to the cell inner membrane. The enzyme catalyses a ubiquinone + n Na(+)(in) + NADH + H(+) = a ubiquinol + n Na(+)(out) + NAD(+). Its function is as follows. NQR complex catalyzes the reduction of ubiquinone-1 to ubiquinol by two successive reactions, coupled with the transport of Na(+) ions from the cytoplasm to the periplasm. NqrA to NqrE are probably involved in the second step, the conversion of ubisemiquinone to ubiquinol. This is Na(+)-translocating NADH-quinone reductase subunit E from Hahella chejuensis (strain KCTC 2396).